A 73-amino-acid chain; its full sequence is Conotoxin Asp7/Gla(3)-TxVI (73 aa).

A signal peptide spans 1–19; it reads MQKLIILLLVAAVLMSTQA. A propeptide spanning residues 20 to 44 is cleaved from the precursor; sequence VLQEKRPKEKIKFLSKRKTDAEKQQ. Intrachain disulfides connect Cys48/Cys62, Cys55/Cys66, and Cys61/Cys71. Residues Pro49 and Pro54 each carry the 4-hydroxyproline modification. A 4-carboxyglutamate modification is found at Glu60. Trp64 is subject to 6'-bromotryptophan.

As to expression, expressed by the venom duct.

Its subcellular location is the secreted. In Conus textile (Cloth-of-gold cone), this protein is Conotoxin Asp7/Gla(3)-TxVI.